The primary structure comprises 285 residues: MTARLIDGRQVAQQVHEEVRQAVERHTAQGRRAPGLAVVLVGENPASQVYVRNKRRTCEALGIESRSHDLPADTPQSVLLDLIDALNADPAVDGILVQLPLPAHFDTETVIERIDPAKDVDGFHPYNVGRLAVRLPTLRPCTPYGVMRLLDSTGEVYKGRNAVVVGASNIVGRPMALELMLAGATVTVCHRFTTDTAEHVARADIVVVAVGRPDLVPGEWIKPGATVIDVGMNRLEDGRLVGDVSFAAAAERAAWITPVPGGVGPMTVAMLMKNTIQSYESRLGR.

An NADP(+)-binding site is contributed by glycine 166 to serine 168.

It belongs to the tetrahydrofolate dehydrogenase/cyclohydrolase family. In terms of assembly, homodimer.

It carries out the reaction (6R)-5,10-methylene-5,6,7,8-tetrahydrofolate + NADP(+) = (6R)-5,10-methenyltetrahydrofolate + NADPH. The catalysed reaction is (6R)-5,10-methenyltetrahydrofolate + H2O = (6R)-10-formyltetrahydrofolate + H(+). Its pathway is one-carbon metabolism; tetrahydrofolate interconversion. Its function is as follows. Catalyzes the oxidation of 5,10-methylenetetrahydrofolate to 5,10-methenyltetrahydrofolate and then the hydrolysis of 5,10-methenyltetrahydrofolate to 10-formyltetrahydrofolate. This chain is Bifunctional protein FolD, found in Thioalkalivibrio sulfidiphilus (strain HL-EbGR7).